The following is a 117-amino-acid chain: Ribonuclease P protein component (117 aa).

Belongs to the RnpA family. In terms of assembly, consists of a catalytic RNA component (M1 or rnpB) and a protein subunit.

It carries out the reaction Endonucleolytic cleavage of RNA, removing 5'-extranucleotides from tRNA precursor.. In terms of biological role, RNaseP catalyzes the removal of the 5'-leader sequence from pre-tRNA to produce the mature 5'-terminus. It can also cleave other RNA substrates such as 4.5S RNA. The protein component plays an auxiliary but essential role in vivo by binding to the 5'-leader sequence and broadening the substrate specificity of the ribozyme. The polypeptide is Ribonuclease P protein component (Lactococcus lactis subsp. cremoris (strain MG1363)).